We begin with the raw amino-acid sequence, 321 residues long: MFFDREEEIERLLEDISYEPNMVTFVYGPINSGKTTLIQEFLKRTSEKYVGFYINFRKTPVANYEEFSRVLFSFDSRIKMIKDVISILGKVNPWIPIPREVLNDILRDKEPINAFSYLREVLEEIRSSGKMPILVFDELQVIKDLKVNGSLIYQLFNFLIHLSKEAHLAHVFAVTSDSLFISEIFGNAKLSGRASYFPVYDLPEEKAIEFLLRLNLSEEESRLVVEYFGGKPSYLVEAPKHRKHLREWCERELTLRAREIRRFKSNLLLEFMDEEEVEVEELSEEAINLVNANILFYDPLRGTLRPQGKLELLAIRKVIKG.

28-35 is a binding site for ATP; the sequence is GPINSGKT.

Belongs to the archaeal ATPase family.

This is an uncharacterized protein from Pyrococcus horikoshii (strain ATCC 700860 / DSM 12428 / JCM 9974 / NBRC 100139 / OT-3).